Reading from the N-terminus, the 225-residue chain is NAD(P)H-quinone oxidoreductase subunit K, chloroplastic (225 aa).

[4Fe-4S] cluster-binding residues include C43, C44, C108, and C139.

Belongs to the complex I 20 kDa subunit family. As to quaternary structure, NDH is composed of at least 16 different subunits, 5 of which are encoded in the nucleus. It depends on [4Fe-4S] cluster as a cofactor.

It is found in the plastid. The protein localises to the chloroplast thylakoid membrane. The enzyme catalyses a plastoquinone + NADH + (n+1) H(+)(in) = a plastoquinol + NAD(+) + n H(+)(out). It carries out the reaction a plastoquinone + NADPH + (n+1) H(+)(in) = a plastoquinol + NADP(+) + n H(+)(out). In terms of biological role, NDH shuttles electrons from NAD(P)H:plastoquinone, via FMN and iron-sulfur (Fe-S) centers, to quinones in the photosynthetic chain and possibly in a chloroplast respiratory chain. The immediate electron acceptor for the enzyme in this species is believed to be plastoquinone. Couples the redox reaction to proton translocation, and thus conserves the redox energy in a proton gradient. The protein is NAD(P)H-quinone oxidoreductase subunit K, chloroplastic of Populus trichocarpa (Western balsam poplar).